The following is a 258-amino-acid chain: UPF0246 protein CKO_03380 (258 aa).

This sequence belongs to the UPF0246 family.

The protein is UPF0246 protein CKO_03380 of Citrobacter koseri (strain ATCC BAA-895 / CDC 4225-83 / SGSC4696).